Here is a 325-residue protein sequence, read N- to C-terminus: Casein kinase I isoform alpha (325 aa).

An N-acetylalanine modification is found at Ala2. At Ser4 the chain carries Phosphoserine. Position 8 is an N6-acetyllysine (Lys8). One can recognise a Protein kinase domain in the interval 17–285 (YKLVRKIGSG…YLRQLFRILF (269 aa)). ATP-binding positions include 23–31 (IGSGSFGDI) and Lys46. The active-site Proton acceptor is the Asp136.

Belongs to the protein kinase superfamily. CK1 Ser/Thr protein kinase family. Casein kinase I subfamily. As to quaternary structure, interacts with the Axin complex. Interacts with TUT1, leading to TUT1 phosphorylation. Interacts with FAM83A, FAM83B, FAM83C, FAM83D, FAM83E, FAM83F, FAM83G and FAM83H (via DUF1669). Interaction with FAM83H recruits CSNK1A1 to keratin filaments. Post-translationally, phosphorylated by MTOR in response to mitogenic stimulation, leading to its activation.

It localises to the cytoplasm. The protein localises to the cytoskeleton. Its subcellular location is the microtubule organizing center. It is found in the centrosome. The protein resides in the chromosome. It localises to the centromere. The protein localises to the kinetochore. Its subcellular location is the nucleus speckle. It is found in the cilium basal body. The protein resides in the spindle. It carries out the reaction L-seryl-[protein] + ATP = O-phospho-L-seryl-[protein] + ADP + H(+). It catalyses the reaction L-threonyl-[protein] + ATP = O-phospho-L-threonyl-[protein] + ADP + H(+). Functionally, casein kinases are operationally defined by their preferential utilization of acidic proteins such as caseins as substrates. Can phosphorylate a large number of proteins. Participates in Wnt signaling. Phosphorylates CTNNB1 at 'Ser-45'. May phosphorylate PER1 and PER2. May play a role in segregating chromosomes during mitosis. May play a role in keratin cytoskeleton disassembly and thereby, it may regulate epithelial cell migration. Acts as a positive regulator of mTORC1 and mTORC2 signaling in response to nutrients by mediating phosphorylation of DEPTOR inhibitor. Acts as an inhibitor of NLRP3 inflammasome assembly by mediating phosphorylation of NLRP3. The polypeptide is Casein kinase I isoform alpha (CSNK1A1) (Oryctolagus cuniculus (Rabbit)).